The following is a 178-amino-acid chain: MNYSVIWAITILILGLVLTLAWARQNPTHPINPLVLNYHTKPSPKRHRMVLVVESFASVDALVELVENILSQTIRVASITVVSQRPDHLRQVPLLHQTCTFSRASGLSALFKETSGTLVVFISKEGFHHFQSPTLLETIDQRGVTAEQTLPGIVLRNTDMPGIDLTTVYRQQRLGLGN.

The first 23 residues, 1 to 23 (MNYSVIWAITILILGLVLTLAWA), serve as a signal peptide directing secretion.

This is an uncharacterized protein from Invertebrate iridescent virus 3 (IIV-3).